A 192-amino-acid chain; its full sequence is Ion-translocating oxidoreductase complex subunit A (192 aa).

Helical transmembrane passes span 5-25 (LLLLISTVLVNNFVLVKFLGL), 39-59 (IGMSMATTFVLTLASILSYLV), 65-85 (LPFDLSYLRTMSFILVIAVVV), 102-122 (ALGIYLPLITTNCAVLGVALL), 134-154 (AIYGFGAALGFSLVLILFSAM), and 171-191 (AIAMITAGLMSLAFMGFTGLV).

Belongs to the NqrDE/RnfAE family. The complex is composed of six subunits: RnfA, RnfB, RnfC, RnfD, RnfE and RnfG.

Its subcellular location is the cell inner membrane. Its function is as follows. Part of a membrane-bound complex that couples electron transfer with translocation of ions across the membrane. The chain is Ion-translocating oxidoreductase complex subunit A from Shewanella baltica (strain OS185).